The sequence spans 89 residues: Toxin To14 (89 aa).

The first 19 residues, 1–19 (MNCLMLIFVVFLLAFGVEC), serve as a signal peptide directing secretion. The LCN-type CS-alpha/beta domain maps to 21–85 (KDDYPVDTAK…SPTKTSGRCN (65 aa)). Disulfide bonds link Cys-33–Cys-84, Cys-37–Cys-60, Cys-46–Cys-67, and Cys-50–Cys-69.

As to expression, expressed by the venom gland.

Its subcellular location is the secreted. In terms of biological role, inhibits voltage-gated sodium channels (Nav). In Tityus obscurus (Amazonian scorpion), this protein is Toxin To14.